The primary structure comprises 704 residues: Protein arginine N-methyltransferase 7 (704 aa).

2 consecutive SAM-dependent MTase PRMT-type domains span residues 14-356 (ENTW…YSLW) and 366-704 (SQPA…EKSE).

The protein belongs to the class I-like SAM-binding methyltransferase superfamily. Protein arginine N-methyltransferase family. PRMT7 subfamily.

Functionally, essential arginine methyltransferase that can both catalyze the formation of omega-N monomethylarginine (MMA) and symmetrical dimethylarginine (sDMA). Specifically mediates the symmetrical dimethylation of arginine residues in the small nuclear ribonucleoproteins SmD1 and SmD3. The polypeptide is Protein arginine N-methyltransferase 7 (Art7) (Drosophila grimshawi (Hawaiian fruit fly)).